Here is a 202-residue protein sequence, read N- to C-terminus: Nucleoside triphosphate pyrophosphatase (202 aa).

The Proton acceptor role is filled by Asp-79.

Belongs to the Maf family. It depends on a divalent metal cation as a cofactor.

It localises to the cytoplasm. The catalysed reaction is a ribonucleoside 5'-triphosphate + H2O = a ribonucleoside 5'-phosphate + diphosphate + H(+). It carries out the reaction a 2'-deoxyribonucleoside 5'-triphosphate + H2O = a 2'-deoxyribonucleoside 5'-phosphate + diphosphate + H(+). Its function is as follows. Nucleoside triphosphate pyrophosphatase. May have a dual role in cell division arrest and in preventing the incorporation of modified nucleotides into cellular nucleic acids. This is Nucleoside triphosphate pyrophosphatase from Rhodospirillum rubrum (strain ATCC 11170 / ATH 1.1.1 / DSM 467 / LMG 4362 / NCIMB 8255 / S1).